The chain runs to 61 residues: Putative protein RenD (61 aa).

The polypeptide is Putative protein RenD (renD) (Escherichia coli (strain K12)).